Consider the following 518-residue polypeptide: Xaa-Pro aminopeptidase 3 (518 aa).

The N-terminal 48 residues, 1-48 (MNNICKLNKFIISKSSSSLSSTSSKIKTNCLIKNAKMFSSSLNLNRFY), are a transit peptide targeting the mitochondrion. Residues Y314, D345, D356, H434, H441, E461, and E485 each contribute to the substrate site. Positions 345, 356, and 434 each coordinate Mn(2+). Mn(2+) contacts are provided by E461 and E485.

It belongs to the peptidase M24B family. As to quaternary structure, homodimer. It depends on Mn(2+) as a cofactor.

It localises to the mitochondrion. The protein localises to the cytoplasm. It catalyses the reaction Release of any N-terminal amino acid, including proline, that is linked to proline, even from a dipeptide or tripeptide.. Catalyzes the removal of a penultimate prolyl residue from the N-termini of peptides, such as Leu-Pro-Ala. Also shows low activity towards peptides with Ala or Ser at the P1 position. This is Xaa-Pro aminopeptidase 3 (xpnpep3) from Dictyostelium discoideum (Social amoeba).